The sequence spans 921 residues: Isoleucine--tRNA ligase 1 (921 aa).

The 'HIGH' region motif lies at 57 to 67; it reads PYANGDIHMGH. Residue Glu-552 participates in L-isoleucyl-5'-AMP binding. Positions 593 to 597 match the 'KMSKS' region motif; the sequence is KMSKS. Residue Lys-596 participates in ATP binding. Zn(2+) contacts are provided by Cys-888, Cys-891, Cys-908, and Cys-911.

It belongs to the class-I aminoacyl-tRNA synthetase family. IleS type 1 subfamily. In terms of assembly, monomer. The cofactor is Zn(2+).

Its subcellular location is the cytoplasm. It carries out the reaction tRNA(Ile) + L-isoleucine + ATP = L-isoleucyl-tRNA(Ile) + AMP + diphosphate. Catalyzes the attachment of isoleucine to tRNA(Ile). As IleRS can inadvertently accommodate and process structurally similar amino acids such as valine, to avoid such errors it has two additional distinct tRNA(Ile)-dependent editing activities. One activity is designated as 'pretransfer' editing and involves the hydrolysis of activated Val-AMP. The other activity is designated 'posttransfer' editing and involves deacylation of mischarged Val-tRNA(Ile). In Bacillus thuringiensis subsp. konkukian (strain 97-27), this protein is Isoleucine--tRNA ligase 1.